The sequence spans 686 residues: Zinc finger protein 7 (686 aa).

Positions 4 to 76 constitute a KRAB domain; it reads VTFGDVAVHF…DLQGAEGTEA (73 aa). Residues K81 and K101 each participate in a glycyl lysine isopeptide (Lys-Gly) (interchain with G-Cter in SUMO2) cross-link. A phosphoserine mark is found at S126 and S138. 6 consecutive C2H2-type zinc fingers follow at residues 223–245, 250–272, 278–300, 306–328, 334–356, and 362–384; these read SRCQ…NNCH, YECA…QRIH, FKCT…QRIH, YRCE…QRIH, YGCR…QRTH, and YPCK…QRMH. Residues K279 and K292 each participate in a glycyl lysine isopeptide (Lys-Gly) (interchain with G-Cter in SUMO2) cross-link. K393 is covalently cross-linked (Glycyl lysine isopeptide (Lys-Gly) (interchain with G-Cter in SUMO2)). 9 consecutive C2H2-type zinc fingers follow at residues 413-435, 441-463, 469-491, 497-519, 525-547, 553-575, 581-603, 634-656, and 662-684; these read FKCD…QLIH, YKCN…QRTH, FKCD…QRIH, YVCN…QRIH, YECL…QRVH, YKCN…QIIH, YECS…QRIH, HQCE…QRIH, and YKCN…QKIH.

This sequence belongs to the krueppel C2H2-type zinc-finger protein family.

The protein localises to the nucleus. Functionally, may be involved in transcriptional regulation. The protein is Zinc finger protein 7 (ZNF7) of Pongo abelii (Sumatran orangutan).